Consider the following 411-residue polypeptide: Adenylosuccinate synthetase (411 aa).

GTP is bound by residues 11-17 and 39-41; these read GDEGKGK and GHT. Residue Asp12 is the Proton acceptor of the active site. 2 residues coordinate Mg(2+): Asp12 and Gly39. Residues 12–15, 37–40, Thr121, Arg135, Gln215, Thr230, and Arg294 each bind IMP; these read DEGK and NAGH. His40 acts as the Proton donor in catalysis. 290–296 provides a ligand contact to substrate; that stretch reads TTTKRPR. Residues Arg296, 322–324, and 400–402 contribute to the GTP site; these read KLD and STS.

It belongs to the adenylosuccinate synthetase family. As to quaternary structure, homodimer. Mg(2+) is required as a cofactor.

Its subcellular location is the cytoplasm. The catalysed reaction is IMP + L-aspartate + GTP = N(6)-(1,2-dicarboxyethyl)-AMP + GDP + phosphate + 2 H(+). The protein operates within purine metabolism; AMP biosynthesis via de novo pathway; AMP from IMP: step 1/2. In terms of biological role, plays an important role in the de novo pathway of purine nucleotide biosynthesis. Catalyzes the first committed step in the biosynthesis of AMP from IMP. The protein is Adenylosuccinate synthetase of Helicobacter pylori (strain G27).